We begin with the raw amino-acid sequence, 67 residues long: Probable Sec-independent protein translocase protein TatE (67 aa).

A helical membrane pass occupies residues I4–G21.

The protein belongs to the TatA/E family. TatE subfamily.

The protein resides in the cell inner membrane. In terms of biological role, part of the twin-arginine translocation (Tat) system that transports large folded proteins containing a characteristic twin-arginine motif in their signal peptide across membranes. TatE shares overlapping functions with TatA. The polypeptide is Probable Sec-independent protein translocase protein TatE (Citrobacter rodentium (strain ICC168) (Citrobacter freundii biotype 4280)).